The following is a 350-amino-acid chain: Neurogenic differentiation factor 1 (350 aa).

Residues 1–91 are disordered; sequence MTKSYSEESM…KKKKMTKARM (91 aa). A compositionally biased stretch (low complexity) spans 7-18; that stretch reads EESMMLESQSSS. A compositionally biased stretch (basic and acidic residues) spans 22–38; it reads DKCHSSSQDERDVDKTS. Residues 44-72 are compositionally biased toward acidic residues; sequence DMEDDDDAGLNRLEDEDDEEEEEEEEDGD. Basic residues predominate over residues 76–91; the sequence is PKRRGPKKKKMTKARM. The short motif at 82–88 is the Nuclear localization signal element; sequence KKKKMTK. A bHLH domain is found at 96–148; sequence MRRMKANARERNRMHGLNDALESLRKVVPCYSKTQKLSKIETLRLAKNYIWAL.

In terms of assembly, efficient DNA binding requires dimerization with another bHLH protein. As to expression, in the embryo, expressed broadly in a subset of primary neurons in the brain and spinal cord. At 28 hours post-fertilization (hpf), regions of expression include telencephalon, olfactory placode, epiphysis, cranial ganglia, acoustic ganglia, Rohon-Beard mechano-sensory neurons and motoneurons. In 2 day postembryonic brain, expressed in many brain regions but absent from subpallium, the ventral preoptic region, ventral thalamus and hypothalamus; sites of expression extend laterally from the ventricular proliferative regions and correspond to freshly determined cell populations. In adult, expressed in all tissues examined with highest levels in brain.

The protein localises to the cytoplasm. Its subcellular location is the nucleus. Functionally, may act as a transcriptional activator. Differentiation factor required for neurogenesis. Acts as an upstream activator of isl1. The sequence is that of Neurogenic differentiation factor 1 from Danio rerio (Zebrafish).